Reading from the N-terminus, the 362-residue chain is Red-sensitive opsin (362 aa).

The Extracellular portion of the chain corresponds to 1–49 (MAAWEAAFAARRRHEEEDTTRDSVFTYTNSNNTRGPFEGPNYHIAPRWV). N-linked (GlcNAc...) asparagine glycosylation is present at asparagine 31. A helical transmembrane segment spans residues 50 to 74 (YNLTSVWMIFVVAASVFTNGLVLVA). The Cytoplasmic portion of the chain corresponds to 75 to 86 (TWKFKKLRHPLN). The chain crosses the membrane as a helical span at residues 87–112 (WILVNLAVADLGETVIASTISVINQI). At 113 to 126 (SGYFILGHPMCVVE) the chain is on the extracellular side. An intrachain disulfide couples cysteine 123 to cysteine 200. Residues 127–146 (GYTVSACGITALWSLAIISW) traverse the membrane as a helical segment. The Cytoplasmic portion of the chain corresponds to 147–165 (ERWFVVCKPFGNIKFDGKL). Residues 166–189 (AVAGILFSWLWSCAWTAPPIFGWS) form a helical membrane-spanning segment. At 190–215 (RYWPHGLKTSCGPDVFSGSSDPGVQS) the chain is on the extracellular side. Residues 216–243 (YMVVLMVTCCFFPLAIIILCYLQVWLAI) form a helical membrane-spanning segment. Residues 244–265 (RAVAAQQKESESTQKAEKEVSR) lie on the Cytoplasmic side of the membrane. Residues 266–289 (MVVVMIVAYCFCWGPYTFFACFAA) form a helical membrane-spanning segment. At 290–297 (ANPGYAFH) the chain is on the extracellular side. The chain crosses the membrane as a helical span at residues 298-322 (PLAAALPAYFAKSATIYNPIIYVFM). The residue at position 309 (lysine 309) is an N6-(retinylidene)lysine. The Cytoplasmic portion of the chain corresponds to 323–362 (NRQFRNCILQLFGKKVDDGSEVSTSRTEVSSVSNSSVSPA).

This sequence belongs to the G-protein coupled receptor 1 family. Opsin subfamily. Post-translationally, phosphorylated on some or all of the serine and threonine residues present in the C-terminal region. The color pigments are found in the cone photoreceptor cells.

The protein resides in the membrane. Visual pigments are the light-absorbing molecules that mediate vision. They consist of an apoprotein, opsin, covalently linked to cis-retinal. In Gallus gallus (Chicken), this protein is Red-sensitive opsin.